A 255-amino-acid polypeptide reads, in one-letter code: Octanoyltransferase (255 aa).

Residues 1–27 form a disordered region; sequence MPPASDAHAAPDAAASTSASPQSCAAP. A BPL/LPL catalytic domain is found at 59-240; it reads PDTGDEIWVV…RLIANLDGAT (182 aa). Substrate contacts are provided by residues 99-106, 171-173, and 184-186; these read RGGQITYH, ALG, and GLS. Catalysis depends on cysteine 202, which acts as the Acyl-thioester intermediate.

Belongs to the LipB family.

It localises to the cytoplasm. It catalyses the reaction octanoyl-[ACP] + L-lysyl-[protein] = N(6)-octanoyl-L-lysyl-[protein] + holo-[ACP] + H(+). It participates in protein modification; protein lipoylation via endogenous pathway; protein N(6)-(lipoyl)lysine from octanoyl-[acyl-carrier-protein]: step 1/2. In terms of biological role, catalyzes the transfer of endogenously produced octanoic acid from octanoyl-acyl-carrier-protein onto the lipoyl domains of lipoate-dependent enzymes. Lipoyl-ACP can also act as a substrate although octanoyl-ACP is likely to be the physiological substrate. The chain is Octanoyltransferase from Burkholderia thailandensis (strain ATCC 700388 / DSM 13276 / CCUG 48851 / CIP 106301 / E264).